A 253-amino-acid chain; its full sequence is Glucosamine-6-phosphate deaminase (253 aa).

Asp65 acts as the Proton acceptor; for enolization step in catalysis. The For ring-opening step role is filled by Asn133. The active-site Proton acceptor; for ring-opening step is His135. Glu140 acts as the For ring-opening step in catalysis.

The protein belongs to the glucosamine/galactosamine-6-phosphate isomerase family. NagB subfamily.

The catalysed reaction is alpha-D-glucosamine 6-phosphate + H2O = beta-D-fructose 6-phosphate + NH4(+). The protein operates within amino-sugar metabolism; N-acetylneuraminate degradation; D-fructose 6-phosphate from N-acetylneuraminate: step 5/5. Catalyzes the reversible isomerization-deamination of glucosamine 6-phosphate (GlcN6P) to form fructose 6-phosphate (Fru6P) and ammonium ion. The sequence is that of Glucosamine-6-phosphate deaminase from Corynebacterium glutamicum (strain ATCC 13032 / DSM 20300 / JCM 1318 / BCRC 11384 / CCUG 27702 / LMG 3730 / NBRC 12168 / NCIMB 10025 / NRRL B-2784 / 534).